We begin with the raw amino-acid sequence, 79 residues long: D-alanyl carrier protein (79 aa).

In terms of domain architecture, Carrier spans 1 to 77 (MDIKAEVIEI…KIVEGVTELR (77 aa)). S35 carries the O-(pantetheine 4'-phosphoryl)serine modification.

It belongs to the DltC family. In terms of processing, 4'-phosphopantetheine is transferred from CoA to a specific serine of apo-DCP.

It is found in the cytoplasm. The protein operates within cell wall biogenesis; lipoteichoic acid biosynthesis. Functionally, carrier protein involved in the D-alanylation of lipoteichoic acid (LTA). The loading of thioester-linked D-alanine onto DltC is catalyzed by D-alanine--D-alanyl carrier protein ligase DltA. The DltC-carried D-alanyl group is further transferred to cell membrane phosphatidylglycerol (PG) by forming an ester bond, probably catalyzed by DltD. D-alanylation of LTA plays an important role in modulating the properties of the cell wall in Gram-positive bacteria, influencing the net charge of the cell wall. The chain is D-alanyl carrier protein from Streptococcus sanguinis (strain SK36).